Here is a 314-residue protein sequence, read N- to C-terminus: Methionyl-tRNA formyltransferase (314 aa).

A (6S)-5,6,7,8-tetrahydrofolate-binding site is contributed by 113-116 (SLLP).

Belongs to the Fmt family.

The enzyme catalyses L-methionyl-tRNA(fMet) + (6R)-10-formyltetrahydrofolate = N-formyl-L-methionyl-tRNA(fMet) + (6S)-5,6,7,8-tetrahydrofolate + H(+). Its function is as follows. Attaches a formyl group to the free amino group of methionyl-tRNA(fMet). The formyl group appears to play a dual role in the initiator identity of N-formylmethionyl-tRNA by promoting its recognition by IF2 and preventing the misappropriation of this tRNA by the elongation apparatus. This is Methionyl-tRNA formyltransferase from Pseudomonas syringae pv. syringae (strain B728a).